Reading from the N-terminus, the 430-residue chain is Enolase (430 aa).

Glutamine 163 is a (2R)-2-phosphoglycerate binding site. Glutamate 205 (proton donor) is an active-site residue. Aspartate 242, glutamate 287, and aspartate 314 together coordinate Mg(2+). The (2R)-2-phosphoglycerate site is built by lysine 339, arginine 368, serine 369, and lysine 390. Catalysis depends on lysine 339, which acts as the Proton acceptor.

This sequence belongs to the enolase family. Requires Mg(2+) as cofactor.

It is found in the cytoplasm. The protein localises to the secreted. The protein resides in the cell surface. The enzyme catalyses (2R)-2-phosphoglycerate = phosphoenolpyruvate + H2O. Its pathway is carbohydrate degradation; glycolysis; pyruvate from D-glyceraldehyde 3-phosphate: step 4/5. Functionally, catalyzes the reversible conversion of 2-phosphoglycerate (2-PG) into phosphoenolpyruvate (PEP). It is essential for the degradation of carbohydrates via glycolysis. The protein is Enolase of Exiguobacterium sibiricum (strain DSM 17290 / CCUG 55495 / CIP 109462 / JCM 13490 / 255-15).